The chain runs to 337 residues: Palmitoyltransferase ZDHHC15 (337 aa).

Residues 1–20 lie on the Cytoplasmic side of the membrane; that stretch reads MRRGWKMALSGGLRCCRRVL. The helical transmembrane segment at 21-41 threads the bilayer; the sequence is SWVPVLVIVLVVLWSYYAYVF. The Lumenal portion of the chain corresponds to 42-56; sequence ELCLVTVLSPAEKVI. The chain crosses the membrane as a helical span at residues 57 to 77; that stretch reads YLILYHAIFVFFTWTYWKSIF. Residues 78–172 are Cytoplasmic-facing; the sequence is TLPQQPNQKF…NNCIGFSNYK (95 aa). Residues 129 to 179 enclose the DHHC domain; that stretch reads RFCDRCHLIKPDRCHHCSVCAMCVLKMDHHCPWVNNCIGFSNYKFFLQFLA. Residues cysteine 131, cysteine 134, histidine 144, cysteine 145, cysteine 148, cysteine 151, and histidine 158 each coordinate Zn(2+). The active-site S-palmitoyl cysteine intermediate is cysteine 159. Cysteine 165 contacts Zn(2+). A helical membrane pass occupies residues 173-193; sequence FFLQFLAYSVLYCLYIATTVF. Residues 194–210 lie on the Lumenal side of the membrane; it reads SYFIKYWRGELPSVRSK. The helical transmembrane segment at 211–234 threads the bilayer; it reads FHVLFLLFVACMFFVSLVILFGYH. The Cytoplasmic portion of the chain corresponds to 235 to 337; that stretch reads CWLVSRNKTT…SSSLAVETET (103 aa). The disordered stretch occupies residues 306–337; that stretch reads PLLANEETWEDNEDDNQDYPEGSSSLAVETET. The span at 312–323 shows a compositional bias: acidic residues; it reads ETWEDNEDDNQD. The span at 327–337 shows a compositional bias: polar residues; it reads GSSSLAVETET.

It belongs to the DHHC palmitoyltransferase family. Autopalmitoylated (in vitro). As to expression, expressed in placenta, liver, lung, kidney, heart and brain.

The protein resides in the golgi apparatus membrane. It localises to the postsynaptic density. It carries out the reaction L-cysteinyl-[protein] + hexadecanoyl-CoA = S-hexadecanoyl-L-cysteinyl-[protein] + CoA. The enzyme catalyses L-cysteinyl-[protein] + tetradecanoyl-CoA = S-tetradecanoyl-L-cysteinyl-[protein] + CoA. It catalyses the reaction L-cysteinyl-[protein] + octadecanoyl-CoA = S-octadecanoyl-L-cysteinyl-[protein] + CoA. In terms of biological role, palmitoyltransferase that catalyzes the addition of palmitate onto various protein substrates. Has no stringent fatty acid selectivity and in addition to palmitate can also transfer onto target proteins myristate from tetradecanoyl-CoA and stearate from octadecanoyl-CoA. Palmitoylates IGF2R and SORT1, promoting their partitioning to an endosomal membrane subdomain where they can interact with the retromer cargo-selective complex. Thereby, regulates retrograde transport from endosomes to the Golgi apparatus of these lysosomal sorting receptors and plays a role in trafficking of lysosomal proteins. In the nervous system, catalyzes the palmitoylation of DLG4/PSD95 and regulates its synaptic clustering and function in synaptogenesis. Could be involved in the differentiation of dopaminergic neurons and the development of the diencephalon. Could also catalyze the palmitoylation of GAP43. Could also palmitoylate DNAJC5 and regulate its localization to the Golgi membrane. Could also palmitoylate FYN as shown in vitro. May palmitoylate CALHM3 subunit of gustatory voltage-gated ion channels and modulate channel gating and kinetics. This Homo sapiens (Human) protein is Palmitoyltransferase ZDHHC15.